Consider the following 101-residue polypeptide: Apolipoprotein C-II (101 aa).

The first 22 residues, 1–22 (MGTRFLLALFLVLLVLGFEVQG), serve as a signal peptide directing secretion. Residues 66-74 (AVDEKLRDM) are lipid binding. The interval 78-101 (STAAVSTYAGIFTDQVLSMLRGEE) is lipoprotein lipase cofactor.

Belongs to the apolipoprotein C2 family. In terms of processing, proapolipoprotein C-II is synthesized as a sialic acid containing glycoprotein which is subsequently desialylated prior to its proteolytic processing. Proapolipoprotein C-II, the major form found in plasma undergoes proteolytic cleavage of its N-terminal hexapeptide to generate apolipoprotein C-II, which occurs as the minor form in plasma.

It localises to the secreted. Functionally, component of chylomicrons, very low-density lipoproteins (VLDL), low-density lipoproteins (LDL), and high-density lipoproteins (HDL) in plasma. Plays an important role in lipoprotein metabolism as an activator of lipoprotein lipase. Both proapolipoprotein C-II and apolipoprotein C-II can activate lipoprotein lipase. In Saimiri boliviensis boliviensis (Bolivian squirrel monkey), this protein is Apolipoprotein C-II (APOC2).